The following is a 259-amino-acid chain: Ribosome maturation factor RimP (259 aa).

The span at 186 to 195 (RGKQAERELK) shows a compositional bias: basic and acidic residues. The tract at residues 186–259 (RGKQAERELK…RGDTDLSEGD (74 aa)) is disordered. Residues 239-248 (KQHRLAAGRS) show a composition bias toward basic residues.

Belongs to the RimP family.

The protein resides in the cytoplasm. Its function is as follows. Required for maturation of 30S ribosomal subunits. The polypeptide is Ribosome maturation factor RimP (Rhodopseudomonas palustris (strain HaA2)).